The sequence spans 314 residues: MPNLRGIRDRIKSVKNTQKITKAMRLVAAARVRRAQEQVLAGRPFADRLVGLLFRLRSRLRFEDVQSPLMERRDVQKVLVLVIAGDRGLCGAYNSNIIRRTVQYLRELQQQGKQFALYLVGNKAISFFRRSNFPIAKTLTNVDPNTPLEGANQLITDDILAPFLSGEYDQVELVYTRFVSLISSRPTVQTLLPLDPDALGQEDETFKLITKGGGFEVLREKQQVRTEPEFAADTIFEQDPTQLLDALLPLYLTSEVLHALQESSASELAARMTAMSAASDNAKKLLSTLTIVYNKARQASITQEILEVVSGANA.

Belongs to the ATPase gamma chain family. F-type ATPases have 2 components, CF(1) - the catalytic core - and CF(0) - the membrane proton channel. CF(1) has five subunits: alpha(3), beta(3), gamma(1), delta(1), epsilon(1). CF(0) has three main subunits: a, b and c.

The protein localises to the cell inner membrane. In terms of biological role, produces ATP from ADP in the presence of a proton gradient across the membrane. The gamma chain is believed to be important in regulating ATPase activity and the flow of protons through the CF(0) complex. The sequence is that of ATP synthase gamma chain from Gloeobacter violaceus (strain ATCC 29082 / PCC 7421).